The primary structure comprises 247 residues: Ras-like protein family member 11B (247 aa).

Positions A29–V247 are small GTPase-like. GTP contacts are provided by residues G40–T47, D87–V91, and N152–D155. The interval Q205–D228 is disordered.

This sequence belongs to the small GTPase superfamily. Ras family.

It catalyses the reaction GTP + H2O = GDP + phosphate + H(+). This Xenopus tropicalis (Western clawed frog) protein is Ras-like protein family member 11B.